A 276-amino-acid chain; its full sequence is Monoglyceride lipase homolog (276 aa).

The protein belongs to the orthopoxvirus OPG043 family.

The chain is Monoglyceride lipase homolog (OPG043) from Cynomys gunnisoni (Gunnison's prairie dog).